The following is an 80-amino-acid chain: Small ribosomal subunit protein bS18 (80 aa).

The protein belongs to the bacterial ribosomal protein bS18 family. Part of the 30S ribosomal subunit. Forms a tight heterodimer with protein bS6.

Its function is as follows. Binds as a heterodimer with protein bS6 to the central domain of the 16S rRNA, where it helps stabilize the platform of the 30S subunit. The chain is Small ribosomal subunit protein bS18 from Staphylococcus saprophyticus subsp. saprophyticus (strain ATCC 15305 / DSM 20229 / NCIMB 8711 / NCTC 7292 / S-41).